A 383-amino-acid polypeptide reads, in one-letter code: Transcription termination factor Rho (383 aa).

Positions 1–22 (MTIETTTKKRPRAARPPRPRES) are disordered. Basic residues predominate over residues 8 to 17 (KKRPRAARPP). The 68-residue stretch at 26–93 (LETVAGLLDV…AEVESVNGST (68 aa)) folds into the Rho RNA-BD domain. ATP-binding positions include 132–137 (GKGQRG), 144–149 (KAGKTM), and Arg-175.

It belongs to the Rho family. As to quaternary structure, homohexamer. The homohexamer assembles into an open ring structure.

Its function is as follows. Facilitates transcription termination by a mechanism that involves Rho binding to the nascent RNA, activation of Rho's RNA-dependent ATPase activity, and release of the mRNA from the DNA template. This is Transcription termination factor Rho from Streptosporangium roseum (strain ATCC 12428 / DSM 43021 / JCM 3005 / KCTC 9067 / NCIMB 10171 / NRRL 2505 / NI 9100).